We begin with the raw amino-acid sequence, 1146 residues long: Nucleolar protein 6 (1146 aa).

The interval 1–48 (MGPAPAGEQLRGATGEPEVMEPALEGTGKEGKKASSRKRTLAEPPAKG) is disordered. S56 is modified (phosphoserine). The stretch at 83-114 (LLRLQVEELLKEVRLSEKKKDRIDAFLREVNQ) forms a coiled coil. Residues S283, S289, and S811 each carry the phosphoserine modification.

Belongs to the NRAP family. As to quaternary structure, part of the small subunit (SSU) processome, composed of more than 70 proteins and the RNA chaperone small nucleolar RNA (snoRNA) U3. Interacts with RRP7A; required for NOL6 localization to nucleolus.

Its subcellular location is the nucleus. It localises to the nucleolus. It is found in the chromosome. Part of the small subunit (SSU) processome, first precursor of the small eukaryotic ribosomal subunit. During the assembly of the SSU processome in the nucleolus, many ribosome biogenesis factors, an RNA chaperone and ribosomal proteins associate with the nascent pre-rRNA and work in concert to generate RNA folding, modifications, rearrangements and cleavage as well as targeted degradation of pre-ribosomal RNA by the RNA exosome. This is Nucleolar protein 6 from Homo sapiens (Human).